A 130-amino-acid polypeptide reads, in one-letter code: Small ribosomal subunit protein uS8 (130 aa).

It belongs to the universal ribosomal protein uS8 family. As to quaternary structure, part of the 30S ribosomal subunit. Contacts proteins S5 and S12.

Its function is as follows. One of the primary rRNA binding proteins, it binds directly to 16S rRNA central domain where it helps coordinate assembly of the platform of the 30S subunit. In Haemophilus influenzae (strain 86-028NP), this protein is Small ribosomal subunit protein uS8.